The sequence spans 31 residues: Cytochrome b6-f complex subunit 6 (31 aa).

A helical transmembrane segment spans residues 4–24 (ILTYFGILFGILTITVIIFVA).

It belongs to the PetL family. As to quaternary structure, the 4 large subunits of the cytochrome b6-f complex are cytochrome b6, subunit IV (17 kDa polypeptide, PetD), cytochrome f and the Rieske protein, while the 4 small subunits are PetG, PetL, PetM and PetN. The complex functions as a dimer.

It localises to the plastid. The protein resides in the chloroplast thylakoid membrane. Functionally, component of the cytochrome b6-f complex, which mediates electron transfer between photosystem II (PSII) and photosystem I (PSI), cyclic electron flow around PSI, and state transitions. PetL is important for photoautotrophic growth as well as for electron transfer efficiency and stability of the cytochrome b6-f complex. The sequence is that of Cytochrome b6-f complex subunit 6 from Chaetosphaeridium globosum (Charophycean green alga).